Reading from the N-terminus, the 581-residue chain is Zinc metalloproteinase nas-36 (581 aa).

Residues 1–95 constitute a propeptide that is removed on maturation; it reads MKEIAHSQAY…FRGANEKGKR (95 aa). The N-linked (GlcNAc...) asparagine glycan is linked to Asn67. The 194-residue stretch at 97–290 folds into the Peptidase M12A domain; that stretch reads AAEYDAKWFQ…IKLINEAYCK (194 aa). 5 disulfide bridges follow: Cys137/Cys289, Cys159/Cys178, Cys293/Cys313, Cys315/Cys324, and Cys336/Cys364. His186 is a Zn(2+) binding site. Glu187 is an active-site residue. The Zn(2+) site is built by His190 and His196. Residues 285-325 enclose the EGF-like domain; it reads NEAYCKGDCKEKNECKNGGYLNPSNCQSCLCPSGFGGSKCE. In terms of domain architecture, CUB spans 336–449; it reads CGGTLKAIID…TGFKLKFRKT (114 aa). An N-linked (GlcNAc...) asparagine glycan is attached at Asn418. One can recognise a TSP type-1 domain in the interval 474-523; it reads NDIWSEWGEWSQCSRSCGACGIKSRLRICKTAQCSGKVQQFLTCNLQACP. 3 cysteine pairs are disulfide-bonded: Cys486–Cys517, Cys490–Cys522, and Cys502–Cys507.

Zn(2+) is required as a cofactor.

The protein resides in the secreted. Inhibited by 1,10-phenanthroline. Its function is as follows. Metalloprotease. Involved in molting, a process during larval stages in which a new cuticle is formed and the old cuticle is shed. In Brugia malayi (Filarial nematode worm), this protein is Zinc metalloproteinase nas-36.